The primary structure comprises 680 residues: Protein terminal ear1 homolog (680 aa).

Positions 223–295 (SLVVLNSLPA…RRLVVEYTRP (73 aa)) constitute an RRM domain. Disordered regions lie at residues 294-415 (RPSL…SWRG) and 593-680 (TEPV…GYTD). Low complexity-rich tracts occupy residues 328 to 340 (PSQS…SGSG) and 379 to 403 (SAAA…KQSQ). Positions 404 to 413 (KGGGGRGGSW) are enriched in gly residues. Low complexity-rich tracts occupy residues 602-621 (SPAP…CAAS) and 634-648 (SSSG…SSNA). Over residues 656 to 666 (HGETGGDRGDD) the composition is skewed to basic and acidic residues.

Highly expressed in shoot apex and inflorescence apex, at intermediate levels in roots and at low levels in leaf blade and leaf sheath.

In terms of biological role, probable RNA-binding protein. Involved in the regular timing (plastochron) of lateral organs formation. May regulate the rate of leaf initiation and the duration of vegetative phase. Seems to be redundant to the function of PLASTOCHRON1, but to act in an independent pathway. This Oryza sativa subsp. indica (Rice) protein is Protein terminal ear1 homolog (PLA2).